A 99-amino-acid chain; its full sequence is UPF0320 protein YER188C-A (99 aa).

Belongs to the UPF0320 family.

In Saccharomyces cerevisiae (strain ATCC 204508 / S288c) (Baker's yeast), this protein is UPF0320 protein YER188C-A.